We begin with the raw amino-acid sequence, 289 residues long: 4-hydroxybenzoate octaprenyltransferase (289 aa).

The next 8 membrane-spanning stretches (helical) occupy residues 23-43, 46-66, 99-119, 141-161, 163-183, 213-233, 234-254, and 268-288; these read IGALLLLWPTLWALWVATPGV, LWILAVFVAGVWLMRAAGCVV, LFVVLVALSFLLVLTLNTMTI, LPQVVLGAAFGWSIPMAFAAV, ESVPLSCWLMFLANILWAVAY, LIIGILQIAVLALMALIGWLN, GLGWGYYWSVLVAGALFVYQQ, and AFMNNNYVGLVLFLGLAMSYV.

It belongs to the UbiA prenyltransferase family. Mg(2+) serves as cofactor.

It localises to the cell inner membrane. It carries out the reaction all-trans-octaprenyl diphosphate + 4-hydroxybenzoate = 4-hydroxy-3-(all-trans-octaprenyl)benzoate + diphosphate. The protein operates within cofactor biosynthesis; ubiquinone biosynthesis. Catalyzes the prenylation of para-hydroxybenzoate (PHB) with an all-trans polyprenyl group. Mediates the second step in the final reaction sequence of ubiquinone-8 (UQ-8) biosynthesis, which is the condensation of the polyisoprenoid side chain with PHB, generating the first membrane-bound Q intermediate 3-octaprenyl-4-hydroxybenzoate. This chain is 4-hydroxybenzoate octaprenyltransferase, found in Citrobacter koseri (strain ATCC BAA-895 / CDC 4225-83 / SGSC4696).